The sequence spans 347 residues: tRNA(Ile)-lysidine synthase (347 aa).

Residue 27-32 participates in ATP binding; that stretch reads SGGADS. Residues 243 to 263 form a disordered region; the sequence is AAPASPSHVEGEASAPHDAAH.

The protein belongs to the tRNA(Ile)-lysidine synthase family.

The protein resides in the cytoplasm. The catalysed reaction is cytidine(34) in tRNA(Ile2) + L-lysine + ATP = lysidine(34) in tRNA(Ile2) + AMP + diphosphate + H(+). Its function is as follows. Ligates lysine onto the cytidine present at position 34 of the AUA codon-specific tRNA(Ile) that contains the anticodon CAU, in an ATP-dependent manner. Cytidine is converted to lysidine, thus changing the amino acid specificity of the tRNA from methionine to isoleucine. The chain is tRNA(Ile)-lysidine synthase from Nitratidesulfovibrio vulgaris (strain ATCC 29579 / DSM 644 / CCUG 34227 / NCIMB 8303 / VKM B-1760 / Hildenborough) (Desulfovibrio vulgaris).